Consider the following 157-residue polypeptide: NudC domain-containing protein 2 (157 aa).

Serine 2 carries the N-acetylserine modification. Positions 14 to 104 constitute a CS domain; the sequence is CATPWGQWYQ…DAANCWTSLL (91 aa). Residues 134–157 are disordered; that stretch reads FDFSGAEISGNYTKGGPDFSNLEK. Serine 142 is subject to Phosphoserine. A Phosphotyrosine modification is found at tyrosine 145.

Interacts with LIS1.

It is found in the chromosome. The protein resides in the centromere. Its subcellular location is the kinetochore. It localises to the cytoplasm. The protein localises to the cytoskeleton. It is found in the microtubule organizing center. The protein resides in the centrosome. Its subcellular location is the spindle pole. Its function is as follows. May regulate the LIS1/dynein pathway by stabilizing LIS1 with Hsp90 chaperone. The chain is NudC domain-containing protein 2 (Nudcd2) from Rattus norvegicus (Rat).